Here is a 270-residue protein sequence, read N- to C-terminus: Diaminopimelate epimerase (270 aa).

Substrate is bound by residues Asn-15, Gln-49, and Asn-66. The active-site Proton donor is the Cys-75. Substrate-binding positions include 76–77, Asn-155, Asn-187, and 204–205; these read GN and ER. The Proton acceptor role is filled by Cys-213. 214 to 215 contributes to the substrate binding site; the sequence is GS.

This sequence belongs to the diaminopimelate epimerase family. In terms of assembly, homodimer.

The protein localises to the cytoplasm. The enzyme catalyses (2S,6S)-2,6-diaminopimelate = meso-2,6-diaminopimelate. It participates in amino-acid biosynthesis; L-lysine biosynthesis via DAP pathway; DL-2,6-diaminopimelate from LL-2,6-diaminopimelate: step 1/1. Functionally, catalyzes the stereoinversion of LL-2,6-diaminopimelate (L,L-DAP) to meso-diaminopimelate (meso-DAP), a precursor of L-lysine and an essential component of the bacterial peptidoglycan. This chain is Diaminopimelate epimerase, found in Rickettsia rickettsii (strain Iowa).